We begin with the raw amino-acid sequence, 324 residues long: NADH-ubiquinone oxidoreductase chain 1 (324 aa).

A run of 8 helical transmembrane segments spans residues 9 to 29, 75 to 95, 106 to 126, 146 to 166, 177 to 197, 237 to 257, 259 to 279, and 299 to 319; these read VLNP…LTLL, FLFL…WAPM, LGVL…LGSG, ISYE…TGGF, SIWL…STLA, ILLM…IPAL, ELTA…FLWV, and FLPM…ALAG.

This sequence belongs to the complex I subunit 1 family.

It localises to the mitochondrion inner membrane. The catalysed reaction is a ubiquinone + NADH + 5 H(+)(in) = a ubiquinol + NAD(+) + 4 H(+)(out). Core subunit of the mitochondrial membrane respiratory chain NADH dehydrogenase (Complex I) that is believed to belong to the minimal assembly required for catalysis. Complex I functions in the transfer of electrons from NADH to the respiratory chain. The immediate electron acceptor for the enzyme is believed to be ubiquinone. The protein is NADH-ubiquinone oxidoreductase chain 1 (MT-ND1) of Thymallus arcticus (Arctic grayling).